The following is a 330-amino-acid chain: Homeobox protein Hox-C13 (330 aa).

Residues 30-47 show a composition bias toward gly residues; that stretch reads GGGGGGGGGTGGAGGGCS. The tract at residues 30 to 50 is disordered; it reads GGGGGGGGGTGGAGGGCSGAS. Positions 260-319 form a DNA-binding region, homeobox; that stretch reads GRKKRVPYTKVQLKELEKEYAASKFITKEKRRRISATTNLSERQVTIWFQNRRVKEKKVV.

This sequence belongs to the Abd-B homeobox family.

It is found in the nucleus. Functionally, transcription factor which plays a role in hair follicle differentiation. Regulates FOXQ1 expression and that of other hair-specific genes. In Homo sapiens (Human), this protein is Homeobox protein Hox-C13 (HOXC13).